The primary structure comprises 187 residues: Calcium and integrin-binding family member 2 (187 aa).

EF-hand domains lie at 66–101, 103–138, and 144–179; these read RENP…LCES, PREL…LTKS, and EVVL…APDF. Ca(2+)-binding residues include Asp-116, Asn-118, Asp-120, Asp-127, Asp-157, Asp-159, Asp-161, Lys-163, and Asp-168.

As to quaternary structure, monomer. Homodimer. Interacts with WHRN and MYO7A. Interacts with ITGA2B (via C-terminus cytoplasmic tail region); the interactions are stabilized/increased in a calcium and magnesium-dependent manner. Interacts with ITGA7 (via C-terminus cytoplasmic tail region); the interactions are stabilized/increased in a calcium and magnesium-dependent manner. Interacts with TMC1. Interacts with TMC2. In terms of tissue distribution, widely expressed.

Its subcellular location is the cytoplasm. The protein resides in the cell projection. It localises to the stereocilium. It is found in the photoreceptor inner segment. The protein localises to the cilium. Its subcellular location is the photoreceptor outer segment. The protein resides in the cell membrane. It localises to the sarcolemma. Calcium- and integrin-binding protein that plays a role in intracellular calcium homeostasis. Acts as an auxiliary subunit of the sensory mechanoelectrical transduction (MET) channel in hair cells. Essential for mechanoelectrical transduction (MET) currents in auditory hair cells and thereby required for hearing. Regulates the function of hair cell mechanotransduction by controlling the distribution of transmembrane channel-like proteins TMC1 and TMC2, and by regulating the function of the MET channels in hair cells. Required for the maintenance of auditory hair cell stereocilia bundle morphology and function and for hair-cell survival in the cochlea. Critical for proper photoreceptor cell maintenance and function. Plays a role in intracellular calcium homeostasis by decreasing ATP-induced calcium release. This Homo sapiens (Human) protein is Calcium and integrin-binding family member 2 (CIB2).